We begin with the raw amino-acid sequence, 146 residues long: Endoribonuclease YbeY (146 aa).

The Zn(2+) site is built by His-108, His-112, and His-118.

It belongs to the endoribonuclease YbeY family. Requires Zn(2+) as cofactor.

It is found in the cytoplasm. Functionally, single strand-specific metallo-endoribonuclease involved in late-stage 70S ribosome quality control and in maturation of the 3' terminus of the 16S rRNA. This is Endoribonuclease YbeY from Onion yellows phytoplasma (strain OY-M).